Reading from the N-terminus, the 157-residue chain is MSRRRVTVKRVILADPRFKSDLLSKFINILMFNGKKSVAESIIYSALDMVLDRSSKDSCMELFEEALDNVRPVVEVKSRRVGGSTYQVPVEVRLVRRNTLAMRWIIESARKRNDKSMEMRLANELFDASEGKGNAVKKREEVHRLAESNKAFAHYRW.

The protein belongs to the universal ribosomal protein uS7 family. Part of the 30S ribosomal subunit. Contacts proteins S9 and S11.

In terms of biological role, one of the primary rRNA binding proteins, it binds directly to 16S rRNA where it nucleates assembly of the head domain of the 30S subunit. Is located at the subunit interface close to the decoding center, probably blocks exit of the E-site tRNA. The chain is Small ribosomal subunit protein uS7 from Blochmanniella floridana.